Reading from the N-terminus, the 612-residue chain is MFNAPRPMASSYSYTDPLSNSAAAGAAFGELDPWSSAPSPAGSVTPARATASASEGRNIAANGNKEEGLNGLINDPPALYVSLLDQLDTSGTGEVSLAAVHRLLGTSKLPAVVVEKIIHLTSRDKSTLTRPEFFCALALVSLAQSSPDPNDISIEKLSFSLSNLPLPKLKPSDPPSVSSGVAASTAAATGFNAWDGTINKGTTYSANNSTFRSTDPMVDNAEDRWWKDQERIVVTLIPEKEGWFLQKYRIESDKRGEGPVARRYSDFVWLMDVLEKRYPFRILPPLPPKRINPSSAFLEARRLALIRLLSFLTAHPVLRTDACLNIFLTSSSFESWRKRTPVSTDEESLSKKLTTAQEMSIPSDLELKLDNLRERLPAMLGHYTRLVVMAERSLVRLQVQAAEAARMAMSTQSIGELVPRCCWRSVQGDDGESGRGVARECGLCEGVGRGWGDVGDGWVSVGEELEKGVQLLQKHIESLKSQRDLYSSFHALFYRHNKLSLDNVDVLRKRVDSRFSKIESLKSAKKPGWEGEVDKLASQSDRDTAEIQRLLARRVFVRACMWHELSVVFHSMQAAQGTMGWKDFVKDQKERTKRLNGVWQGLEETLESMPLE.

The interval 35 to 68 (SSAPSPAGSVTPARATASASEGRNIAANGNKEEG) is disordered. Positions 226–334 (WKDQERIVVT…NIFLTSSSFE (109 aa)) constitute a PX domain. A 1,2-diacyl-sn-glycero-3-phospho-(1D-myo-inositol-3-phosphate) contacts are provided by Arg263, Ser265, Lys289, and Arg301.

This sequence belongs to the sorting nexin family.

The protein localises to the cytoplasm. The protein resides in the membrane. Its function is as follows. Required for vacuolar protein sorting. The chain is Sorting nexin MVP1 (MVP1) from Cryptococcus neoformans var. neoformans serotype D (strain B-3501A) (Filobasidiella neoformans).